The chain runs to 227 residues: Cytochrome c oxidase subunit 2 (227 aa).

Residues 1 to 14 (MAYPFQLGLQDATS) are Mitochondrial intermembrane-facing. The chain crosses the membrane as a helical span at residues 15 to 45 (PIMEELLHFHDHTLMIVFLISSLVLYIISLM). The Mitochondrial matrix portion of the chain corresponds to 46–59 (LTTKLTHTSTMDAQ). Residues 60–87 (EVETVWTILPAIILILIALPSLRILYMM) traverse the membrane as a helical segment. Residues 88 to 227 (DEINNPSLTV…YFETWSAVMV (140 aa)) are Mitochondrial intermembrane-facing. Positions 161, 196, 198, 200, 204, and 207 each coordinate Cu cation. Glu-198 contributes to the Mg(2+) binding site. Position 218 is a phosphotyrosine (Tyr-218).

Belongs to the cytochrome c oxidase subunit 2 family. Component of the cytochrome c oxidase (complex IV, CIV), a multisubunit enzyme composed of 14 subunits. The complex is composed of a catalytic core of 3 subunits MT-CO1, MT-CO2 and MT-CO3, encoded in the mitochondrial DNA, and 11 supernumerary subunits COX4I, COX5A, COX5B, COX6A, COX6B, COX6C, COX7A, COX7B, COX7C, COX8 and NDUFA4, which are encoded in the nuclear genome. The complex exists as a monomer or a dimer and forms supercomplexes (SCs) in the inner mitochondrial membrane with NADH-ubiquinone oxidoreductase (complex I, CI) and ubiquinol-cytochrome c oxidoreductase (cytochrome b-c1 complex, complex III, CIII), resulting in different assemblies (supercomplex SCI(1)III(2)IV(1) and megacomplex MCI(2)III(2)IV(2)). Found in a complex with TMEM177, COA6, COX18, COX20, SCO1 and SCO2. Interacts with TMEM177 in a COX20-dependent manner. Interacts with COX20. Interacts with COX16. Cu cation serves as cofactor.

It is found in the mitochondrion inner membrane. It carries out the reaction 4 Fe(II)-[cytochrome c] + O2 + 8 H(+)(in) = 4 Fe(III)-[cytochrome c] + 2 H2O + 4 H(+)(out). Component of the cytochrome c oxidase, the last enzyme in the mitochondrial electron transport chain which drives oxidative phosphorylation. The respiratory chain contains 3 multisubunit complexes succinate dehydrogenase (complex II, CII), ubiquinol-cytochrome c oxidoreductase (cytochrome b-c1 complex, complex III, CIII) and cytochrome c oxidase (complex IV, CIV), that cooperate to transfer electrons derived from NADH and succinate to molecular oxygen, creating an electrochemical gradient over the inner membrane that drives transmembrane transport and the ATP synthase. Cytochrome c oxidase is the component of the respiratory chain that catalyzes the reduction of oxygen to water. Electrons originating from reduced cytochrome c in the intermembrane space (IMS) are transferred via the dinuclear copper A center (CU(A)) of subunit 2 and heme A of subunit 1 to the active site in subunit 1, a binuclear center (BNC) formed by heme A3 and copper B (CU(B)). The BNC reduces molecular oxygen to 2 water molecules using 4 electrons from cytochrome c in the IMS and 4 protons from the mitochondrial matrix. This chain is Cytochrome c oxidase subunit 2 (MT-CO2), found in Lycalopex sechurae (Sechuran desert fox).